The following is a 1076-amino-acid chain: Nuclear factor of activated T-cells, cytoplasmic 3 (1076 aa).

Thr-2 is subject to N-acetylthreonine. A calcineurin-binding region spans residues 110–115 (PSIQIT). Residues 206-307 (LGSPLTSPGG…PGHSPRGSVT (102 aa)) are disordered. 2 repeat units span residues 208–224 (SPLT…PGEE) and 237–253 (SPRQ…ITDE). The interval 208–309 (SPLTSPGGSP…HSPRGSVTED (102 aa)) is 3 X SP repeats. Over residues 237–254 (SPRQSPCHSPRSSITDEN) the composition is skewed to polar residues. The segment covering 257–271 (SPRPASGPSSRPTSP) has biased composition (low complexity). Positions 274 to 276 (KRR) match the Nuclear localization signal motif. The stretch at 293–309 (SPVPSPGHSPRGSVTED) is repeat 3. Ser-345 is subject to Phosphoserine. Residues 359 to 390 (CSDDQGSLSPSRETSVDDGLGSQYPLKKDSSG) are disordered. Positions 362–371 (DQGSLSPSRE) are enriched in polar residues. Ser-373 carries the phosphoserine modification. Positions 416 to 597 (SSLPPLDWPL…IPVECSQRSA (182 aa)) constitute an RHD domain. A DNA-binding region spans residues 445-452 (RAHYETEG). The short motif at 687–689 (KRK) is the Nuclear localization signal element. 2 disordered regions span residues 700-744 (PVLM…ALSA) and 863-987 (GHLL…GGLS). Residues 713 to 722 (LSSVPSLPVP) are compositionally biased toward low complexity. Polar residues-rich tracts occupy residues 724–734 (SAQTQRPSSDT) and 888–911 (SAGQ…SHLQ). Composition is skewed to low complexity over residues 917 to 939 (PSHP…SSPI) and 946 to 965 (QLQS…SPSP). A compositionally biased stretch (polar residues) spans 970–981 (HSGQHSTQAQST). Residues 1032–1041 (TLDDVNEIIG) carry the Nuclear export signal motif. The segment at 1049-1076 (VSQGPEVIRDAPLPGPESPDVMSSNSAQ) is disordered. Residue Ser-1066 is modified to Phosphoserine.

As to quaternary structure, NFATC proteins bind to DNA as monomers. Member of the multicomponent NFATC transcription complex that consists of at least two components, a pre-existing cytoplasmic component NFATC2 and an inducible nuclear component NFATC1. Other members such as NFATC4, or members of the activating protein-1 family, MAF, GATA4 and Cbp/p300 can also bind the complex. Component of a promoter-binding complex composed of STAT3, NFATC3 and NFATC4; complex formation is enhanced by calcineurin. Interacts with TRIM17; this interaction prevents NFATC3 nuclear localization. Interacts with and ubiquitinated by STUB1/CHIP; HSPA1A/HSP70 is required as a co-chaperone. In terms of processing, phosphorylated by NFATC-kinase; dephosphorylated by calcineurin. Ubiquitinated by STUB1/CHIP, leading to proteasomal degradation. Expressed in cardiomyocytes (at protein level).

The protein resides in the cytoplasm. It is found in the nucleus. Functionally, acts as a regulator of transcriptional activation. Binds to the TNFSF11/RANKL promoter region and promotes TNFSF11 transcription. Binding to the TNFSF11 promoter region is increased by high levels of Ca(2+) which induce NFATC3 expression and may lead to regulation of TNFSF11 expression in osteoblasts. Plays a role in promoting mesenteric arterial wall remodeling in response to the intermittent hypoxia-induced increase in EDN1 and ROCK signaling. As a result NFATC3 colocalizes with F-actin filaments, translocates to the nucleus and promotes transcription of the smooth muscle hypertrophy and differentiation marker ACTA2. Promotes lipopolysaccharide-induced apoptosis and hypertrophy in cardiomyocytes. Following JAK/STAT signaling activation and as part of a complex with NFATC4 and STAT3, binds to the alpha-beta E4 promoter region of CRYAB and activates transcription in cardiomyocytes. In conjunction with NFATC4, involved in embryonic heart development via maintenance of cardiomyocyte survival, proliferation and differentiation. Plays a role in the inducible expression of cytokine genes in T-cells, especially in the induction of the IL-2. Required for thymocyte maturation during DN3 to DN4 transition and during positive selection. Positively regulates macrophage-derived polymicrobial clearance, via binding to the promoter region and promoting transcription of NOS2 resulting in subsequent generation of nitric oxide. Involved in Ca(2+)-mediated transcriptional responses upon Ca(2+) influx via ORAI1 CRAC channels. In Rattus norvegicus (Rat), this protein is Nuclear factor of activated T-cells, cytoplasmic 3.